Consider the following 283-residue polypeptide: Putative replication protein XF_b0001 (283 aa).

This is Putative replication protein XF_b0001 from Xylella fastidiosa (strain 9a5c).